Here is a 302-residue protein sequence, read N- to C-terminus: Putative fructose-bisphosphate aldolase (302 aa).

Residue Asp-86 is the Proton donor of the active site. 4 residues coordinate Zn(2+): His-87, Asp-116, Glu-146, and His-192. Gly-193 contacts dihydroxyacetone phosphate. Residue His-223 coordinates Zn(2+). Dihydroxyacetone phosphate contacts are provided by residues 224-226 and 245-248; these read GAD and NVNR.

This sequence belongs to the class II fructose-bisphosphate aldolase family. As to quaternary structure, homodimer. Requires Zn(2+) as cofactor.

The catalysed reaction is beta-D-fructose 1,6-bisphosphate = D-glyceraldehyde 3-phosphate + dihydroxyacetone phosphate. The protein operates within carbohydrate degradation; glycolysis; D-glyceraldehyde 3-phosphate and glycerone phosphate from D-glucose: step 4/4. In terms of biological role, catalyzes the aldol condensation of dihydroxyacetone phosphate (DHAP or glycerone-phosphate) with glyceraldehyde 3-phosphate (G3P) to form fructose 1,6-bisphosphate (FBP) in gluconeogenesis and the reverse reaction in glycolysis. The chain is Putative fructose-bisphosphate aldolase from Coccidioides immitis (strain RS) (Valley fever fungus).